A 336-amino-acid chain; its full sequence is MNAPEILNGATAAAPAGTGEATPVHARARSPLTRREQKEAYENNKLFKRLARQVGEAIVDFNMIEDGDKVMVCLSGGKDSYAMLEILMRLRERAPINFDIVAVNLDQKQPGFPEHVLPEYLKQLDIPFHIENQDTYSIVKRLVPEGKTTCSLCSRLRRGILYRVAGELGATKIALGHHRDDILQTLLLNMFYGGKLKGMPPKLQSDDGKNIVIRPLAYVKETDLEKYAELREFPIIPCNLCGSQPNLKRAEMKALVRDWEKRFPGRIENMFNALANVVPSHLMDHKLFPFAGLRATGEADPQGDIAFDEEPCSTDSGNSTTLDGAKSIAIVQFDDL.

Over residues 11-23 (TAAAPAGTGEATP) the composition is skewed to low complexity. Residues 11–31 (TAAAPAGTGEATPVHARARSP) are disordered. The short motif at 75–80 (SGGKDS) is the PP-loop motif element. Cys150, Cys153, and Cys241 together coordinate [4Fe-4S] cluster.

The protein belongs to the TtcA family. Homodimer. Requires Mg(2+) as cofactor. [4Fe-4S] cluster is required as a cofactor.

The protein localises to the cytoplasm. The enzyme catalyses cytidine(32) in tRNA + S-sulfanyl-L-cysteinyl-[cysteine desulfurase] + AH2 + ATP = 2-thiocytidine(32) in tRNA + L-cysteinyl-[cysteine desulfurase] + A + AMP + diphosphate + H(+). It participates in tRNA modification. In terms of biological role, catalyzes the ATP-dependent 2-thiolation of cytidine in position 32 of tRNA, to form 2-thiocytidine (s(2)C32). The sulfur atoms are provided by the cysteine/cysteine desulfurase (IscS) system. The sequence is that of tRNA-cytidine(32) 2-sulfurtransferase from Paraburkholderia xenovorans (strain LB400).